Reading from the N-terminus, the 128-residue chain is Sulfurtransferase TusD (128 aa).

The Cysteine persulfide intermediate role is filled by C78.

The protein belongs to the DsrE/TusD family. In terms of assembly, heterohexamer, formed by a dimer of trimers. The hexameric TusBCD complex contains 2 copies each of TusB, TusC and TusD. The TusBCD complex interacts with TusE.

The protein localises to the cytoplasm. Part of a sulfur-relay system required for 2-thiolation of 5-methylaminomethyl-2-thiouridine (mnm(5)s(2)U) at tRNA wobble positions. Accepts sulfur from TusA and transfers it in turn to TusE. The polypeptide is Sulfurtransferase TusD (Salmonella agona (strain SL483)).